A 271-amino-acid chain; its full sequence is Bifunctional protein FolD (271 aa).

NADP(+) contacts are provided by residues 154 to 156, Ser181, and Ile222; that span reads GRS.

The protein belongs to the tetrahydrofolate dehydrogenase/cyclohydrolase family. As to quaternary structure, homodimer.

The enzyme catalyses (6R)-5,10-methylene-5,6,7,8-tetrahydrofolate + NADP(+) = (6R)-5,10-methenyltetrahydrofolate + NADPH. It catalyses the reaction (6R)-5,10-methenyltetrahydrofolate + H2O = (6R)-10-formyltetrahydrofolate + H(+). Its pathway is one-carbon metabolism; tetrahydrofolate interconversion. In terms of biological role, catalyzes the oxidation of 5,10-methylenetetrahydrofolate to 5,10-methenyltetrahydrofolate and then the hydrolysis of 5,10-methenyltetrahydrofolate to 10-formyltetrahydrofolate. In Thermotoga sp. (strain RQ2), this protein is Bifunctional protein FolD.